The sequence spans 361 residues: Phosphoserine aminotransferase (361 aa).

R42 lines the L-glutamate pocket. Residues 76–77 (AR), W102, T153, D173, and Q196 each bind pyridoxal 5'-phosphate. N6-(pyridoxal phosphate)lysine is present on K197. 238 to 239 (NT) is a binding site for pyridoxal 5'-phosphate.

The protein belongs to the class-V pyridoxal-phosphate-dependent aminotransferase family. SerC subfamily. Homodimer. Pyridoxal 5'-phosphate is required as a cofactor.

The protein localises to the cytoplasm. The catalysed reaction is O-phospho-L-serine + 2-oxoglutarate = 3-phosphooxypyruvate + L-glutamate. It catalyses the reaction 4-(phosphooxy)-L-threonine + 2-oxoglutarate = (R)-3-hydroxy-2-oxo-4-phosphooxybutanoate + L-glutamate. It participates in amino-acid biosynthesis; L-serine biosynthesis; L-serine from 3-phospho-D-glycerate: step 2/3. The protein operates within cofactor biosynthesis; pyridoxine 5'-phosphate biosynthesis; pyridoxine 5'-phosphate from D-erythrose 4-phosphate: step 3/5. In terms of biological role, catalyzes the reversible conversion of 3-phosphohydroxypyruvate to phosphoserine and of 3-hydroxy-2-oxo-4-phosphonooxybutanoate to phosphohydroxythreonine. This is Phosphoserine aminotransferase from Pectobacterium carotovorum subsp. carotovorum (strain PC1).